A 450-amino-acid polypeptide reads, in one-letter code: MFGSKFKICKIEAYEVIDSRGFPTVAAKVYAKNGVFAKAMVPSGASTGEREAVELRDGDKERFNGKGVLKAVNNVNTIIAPKVVGMDCRQQTKIDELMISLDGTPNKAKLGANAILAVSLAVAKLAAMIEEKPLYKYIRQNIMGDSSDSWTMPVPMLNVINGGAHADNTIDFQEFMFMPVGAKSLKEAVRMASECFHSLQSILKSKKLDTNKGDEGGFAPNLKNADEALKLMVEAVEKAGYKPGVDADVAFALDPATSELFDADKKTYTFEKALKAKILTAKDAVKKSEDMVKYWDGLCKKYPIISIEDGLAENDWDGFQLMVKDLGSRVQIVGDDLFCTNPKIVKEGISKGVANSVLIKVNQIGTLTETIETIKAAHAAGWTCVVSHRSGETEDTTIADIAVGLSTGQIKTGSMSRSERIAKYNRLIEIENELGSKAHYPGKSTFKSIK.

Gln-173 contributes to the (2R)-2-phosphoglycerate binding site. The Proton donor role is filled by Glu-215. Residues Asp-254, Glu-308, and Asp-335 each coordinate Mg(2+). (2R)-2-phosphoglycerate contacts are provided by Lys-360, Arg-389, Ser-390, and Lys-411. The Proton acceptor role is filled by Lys-360.

It belongs to the enolase family. Requires Mg(2+) as cofactor.

The protein localises to the cytoplasm. It localises to the secreted. The protein resides in the cell surface. The catalysed reaction is (2R)-2-phosphoglycerate = phosphoenolpyruvate + H2O. It functions in the pathway carbohydrate degradation; glycolysis; pyruvate from D-glyceraldehyde 3-phosphate: step 4/5. In terms of biological role, catalyzes the reversible conversion of 2-phosphoglycerate (2-PG) into phosphoenolpyruvate (PEP). It is essential for the degradation of carbohydrates via glycolysis. This chain is Enolase, found in Malacoplasma penetrans (strain HF-2) (Mycoplasma penetrans).